A 308-amino-acid polypeptide reads, in one-letter code: PAK4-inhibitor inka1 (308 aa).

Positions Glu-81–Ser-105 are disordered. Residues Ser-87–Glu-98 are compositionally biased toward low complexity. Inka box regions lie at residues Asp-164–Glu-201 and Asp-281–Ile-308.

The protein belongs to the INKA family. Interacts with pak4/pak5.

Its subcellular location is the nucleus. It localises to the cytoplasm. Functionally, inhibitor of the serine/threonine-protein kinase pak4/pak5. Acts by binding pak4/pak5 in a substrate-like manner, inhibiting the protein kinase activity. Required for the proper migration of neural crest cells during embryonic development, probably by inhibiting pak4/pak5. This chain is PAK4-inhibitor inka1, found in Danio rerio (Zebrafish).